A 101-amino-acid chain; its full sequence is Small ribosomal subunit protein uS14 (101 aa).

The segment covering 1-10 has biased composition (basic and acidic residues); sequence MAKKSSIEKN. Residues 1–23 are disordered; sequence MAKKSSIEKNNRRRKMTKNAAPK. Residues 11 to 23 are compositionally biased toward basic residues; that stretch reads NRRRKMTKNAAPK.

The protein belongs to the universal ribosomal protein uS14 family. As to quaternary structure, part of the 30S ribosomal subunit. Contacts proteins S3 and S10.

In terms of biological role, binds 16S rRNA, required for the assembly of 30S particles and may also be responsible for determining the conformation of the 16S rRNA at the A site. This chain is Small ribosomal subunit protein uS14, found in Rhodopseudomonas palustris (strain BisB5).